Here is a 335-residue protein sequence, read N- to C-terminus: MKSTSKIYTDKDSNLDVIKGKRIAVLGYGSQGRAWAQNLRDSGLNVVVGLEREGKSWELAKSDGIIPLHTKDAVKDADIIVFLVPDMVQRTLWLESVQPYMKKGADLVFAHGFNIHYKLIEPPKDSDVYMIAPKGPGPTVREYYKAGGGVPALVAIQQDVSGTALQKALAIAKGIGATRAGVIPTTFKEETETDLFGEQVILVGGIMELMKAAFETLVEEGYQPEVAYFETINELKMLVDLVYEKGITGMLKAVSDTAKYGGMTVGKFVINEDVRKRMKEALQRIKSGKFAEEWVEEYGRGMPTVVNGLSQVQNSLEEKIGNQLKDLIQKGKPKS.

The KARI N-terminal Rossmann domain occupies 5–185; sequence SKIYTDKDSN…GATRAGVIPT (181 aa). NADP(+)-binding positions include 28-31, serine 56, and 86-89; these read YGSQ and DMVQ. The active site involves histidine 111. NADP(+) is bound at residue glycine 137. The region spanning 186-331 is the KARI C-terminal knotted domain; it reads TFKEETETDL…NQLKDLIQKG (146 aa). The Mg(2+) site is built by aspartate 194, glutamate 198, glutamate 230, and glutamate 234. Position 255 (serine 255) interacts with substrate.

This sequence belongs to the ketol-acid reductoisomerase family. It depends on Mg(2+) as a cofactor.

It carries out the reaction (2R)-2,3-dihydroxy-3-methylbutanoate + NADP(+) = (2S)-2-acetolactate + NADPH + H(+). It catalyses the reaction (2R,3R)-2,3-dihydroxy-3-methylpentanoate + NADP(+) = (S)-2-ethyl-2-hydroxy-3-oxobutanoate + NADPH + H(+). Its pathway is amino-acid biosynthesis; L-isoleucine biosynthesis; L-isoleucine from 2-oxobutanoate: step 2/4. It functions in the pathway amino-acid biosynthesis; L-valine biosynthesis; L-valine from pyruvate: step 2/4. Involved in the biosynthesis of branched-chain amino acids (BCAA). Catalyzes an alkyl-migration followed by a ketol-acid reduction of (S)-2-acetolactate (S2AL) to yield (R)-2,3-dihydroxy-isovalerate. In the isomerase reaction, S2AL is rearranged via a Mg-dependent methyl migration to produce 3-hydroxy-3-methyl-2-ketobutyrate (HMKB). In the reductase reaction, this 2-ketoacid undergoes a metal-dependent reduction by NADPH to yield (R)-2,3-dihydroxy-isovalerate. The sequence is that of Ketol-acid reductoisomerase (NADP(+)) from Saccharolobus islandicus (strain Y.G.57.14 / Yellowstone #1) (Sulfolobus islandicus).